Consider the following 302-residue polypeptide: Ribose-5-phosphate isomerase (302 aa).

Belongs to the ribose 5-phosphate isomerase family.

The protein localises to the cytoplasm. It catalyses the reaction aldehydo-D-ribose 5-phosphate = D-ribulose 5-phosphate. It functions in the pathway carbohydrate degradation; pentose phosphate pathway; D-ribose 5-phosphate from D-ribulose 5-phosphate (non-oxidative stage): step 1/1. The polypeptide is Ribose-5-phosphate isomerase (RKI1) (Cryptococcus neoformans var. neoformans serotype D (strain B-3501A) (Filobasidiella neoformans)).